Consider the following 357-residue polypeptide: Eugenol O-methyltransferase (357 aa).

Residues G203, D226, D246, M247, and K260 each contribute to the S-adenosyl-L-methionine site. The active-site Proton acceptor is H264.

Belongs to the class I-like SAM-binding methyltransferase superfamily. Cation-independent O-methyltransferase family. COMT subfamily. In terms of tissue distribution, specifically expressed in the peltate glandular trichomes on the surface of the young basil leaves.

It carries out the reaction (E)-isoeugenol + S-adenosyl-L-methionine = (E)-isomethyleugenol + S-adenosyl-L-homocysteine + H(+). The protein operates within aromatic compound metabolism; phenylpropanoid biosynthesis. Phenylpropene O-methyltransferase that catalyzes the methylation of the para-4-hydroxyl of eugenol to methyleugenol. Can also convert chavicol to methylchavicol but with less affinity. The polypeptide is Eugenol O-methyltransferase (EOMT1) (Ocimum basilicum (Sweet basil)).